A 417-amino-acid chain; its full sequence is D-galactonate dehydratase family member Dd703_0947 (417 aa).

Histidine 127 contacts substrate. Tyrosine 158 functions as the Proton donor/acceptor in the catalytic mechanism. Aspartate 223 contacts Mg(2+). Residue histidine 225 is the Proton donor/acceptor of the active site. Mg(2+) is bound by residues glutamate 249 and glutamate 275. Residues glutamate 275, arginine 296, histidine 325, aspartate 329, and glutamate 352 each coordinate substrate.

This sequence belongs to the mandelate racemase/muconate lactonizing enzyme family. GalD subfamily. Mg(2+) serves as cofactor.

The catalysed reaction is D-mannonate = 2-dehydro-3-deoxy-D-gluconate + H2O. The enzyme catalyses D-gluconate = 2-dehydro-3-deoxy-D-gluconate + H2O. Has low dehydratase activity with D-mannonate and D-gluconate, suggesting that these are not physiological substrates and that it has no significant role in the in vivo degradation of these compounds. Has no detectable activity with a panel of 70 other acid sugars (in vitro). This chain is D-galactonate dehydratase family member Dd703_0947, found in Musicola paradisiaca (strain Ech703) (Dickeya paradisiaca).